We begin with the raw amino-acid sequence, 62 residues long: Photosystem II reaction center protein Z (62 aa).

The next 2 membrane-spanning stretches (helical) occupy residues Ala-8 to Ala-28 and Phe-41 to Val-61.

The protein belongs to the PsbZ family. In terms of assembly, PSII is composed of 1 copy each of membrane proteins PsbA, PsbB, PsbC, PsbD, PsbE, PsbF, PsbH, PsbI, PsbJ, PsbK, PsbL, PsbM, PsbT, PsbY, PsbZ, Psb30/Ycf12, at least 3 peripheral proteins of the oxygen-evolving complex and a large number of cofactors. It forms dimeric complexes.

The protein localises to the plastid. It localises to the chloroplast thylakoid membrane. Functionally, may control the interaction of photosystem II (PSII) cores with the light-harvesting antenna, regulates electron flow through the 2 photosystem reaction centers. PSII is a light-driven water plastoquinone oxidoreductase, using light energy to abstract electrons from H(2)O, generating a proton gradient subsequently used for ATP formation. The chain is Photosystem II reaction center protein Z from Nephroselmis olivacea (Green alga).